We begin with the raw amino-acid sequence, 191 residues long: Programmed cell death protein 6 (191 aa).

Position 2 is an N-acetylalanine (A2). EF-hand domains are found at residues 23–58, 59–89, 90–125, 126–161, and 162–191; these read PDQSFLWNVFQRVDKDRSGVISDTELQQALSNGTWT, PFNPVTVRSIISMFDRENKAGVNFSEFTGVW, KYITDWQNVFRTYDRDNSGMIDKNELKQALSGFGYR, LSDQFHDILIRKFDRQGRGQIAFDDFIQGCIVLQRL, and TDIFRRYDTDQDGWIQVSYEQYLSMVFSIV. 5 residues coordinate Ca(2+): D36, D38, S40, V42, and E47. Residues D103, D105, S107, M109, and E114 each contribute to the Ca(2+) site. Positions 169, 171, 173, and 175 each coordinate Mg(2+).

In terms of assembly, homodimer and heterodimer; heterodimerizes (via the EF-hand 5) with PEF1. Isoform 1 and isoform 2 self-associate; probably forming homodimers. Interacts with CPNE4 (via VWFA domain). Interacts with PDCD6IP; the interaction is calcium-dependent. Interacts with RBM22. Interacts with PLSCR4. Interacts with ANXA7 and TSG101. Interacts with DAPK1. Interacts with SEC31A; the interaction is calcium-dependent and promotes monoubiquitination of SEC31A. Interacts with ANXA11 (via N-terminus); the interaction is calcium-dependent. Interacts with PLSCR3 (via N-terminus); the interaction is calcium-dependent. Interacts with MCOLN1; the interaction is calcium-dependent. Interacts with KDR; the interaction is calcium-dependent. Interacts with HEBP2; the interaction is calcium-dependent. Interacts with TFG. Isoform 1: Interacts with SHISA5, leading to stabilize it. Isoform 2: Does not interact with SHISA5. Isoform 2: Does not interact with PDCD6IP, TSG101, ANXA7 and ANXA11.

The protein resides in the endoplasmic reticulum membrane. Its subcellular location is the cytoplasmic vesicle. It localises to the COPII-coated vesicle membrane. The protein localises to the cytoplasm. It is found in the nucleus. The protein resides in the endosome. In terms of biological role, calcium sensor that plays a key role in processes such as endoplasmic reticulum (ER)-Golgi vesicular transport, endosomal biogenesis or membrane repair. Acts as an adapter that bridges unrelated proteins or stabilizes weak protein-protein complexes in response to calcium: calcium-binding triggers exposure of apolar surface, promoting interaction with different sets of proteins thanks to 3 different hydrophobic pockets, leading to translocation to membranes. Involved in ER-Golgi transport by promoting the association between PDCD6IP and TSG101, thereby bridging together the ESCRT-III and ESCRT-I complexes. Together with PEF1, acts as a calcium-dependent adapter for the BCR(KLHL12) complex, a complex involved in ER-Golgi transport by regulating the size of COPII coats. In response to cytosolic calcium increase, the heterodimer formed with PEF1 interacts with, and bridges together the BCR(KLHL12) complex and SEC31 (SEC31A or SEC31B), promoting monoubiquitination of SEC31 and subsequent collagen export, which is required for neural crest specification. Involved in the regulation of the distribution and function of MCOLN1 in the endosomal pathway. Promotes localization and polymerization of TFG at endoplasmic reticulum exit site. Required for T-cell receptor-, Fas-, and glucocorticoid-induced apoptosis. May mediate Ca(2+)-regulated signals along the death pathway: interaction with DAPK1 can accelerate apoptotic cell death by increasing caspase-3 activity. Its role in apoptosis may however be indirect, as suggested by knockout experiments. May inhibit KDR/VEGFR2-dependent angiogenesis; the function involves inhibition of VEGF-induced phosphorylation of the Akt signaling pathway. In case of infection by HIV-1 virus, indirectly inhibits HIV-1 production by affecting viral Gag expression and distribution. Its function is as follows. Has a lower Ca(2+) affinity than isoform 1. In Homo sapiens (Human), this protein is Programmed cell death protein 6 (PDCD6).